We begin with the raw amino-acid sequence, 483 residues long: 5-hydroxytryptamine receptor 3A (483 aa).

Positions 1 to 23 (MPLCIPQVLLALFLSVLIAQGEG) are cleaved as a signal peptide. The Extracellular portion of the chain corresponds to 24–246 (SRRRATQAHS…MKFYVVIRRR (223 aa)). Asn109, Asn175, and Asn191 each carry an N-linked (GlcNAc...) asparagine glycan. Cysteines 162 and 176 form a disulfide. A helical transmembrane segment spans residues 247–273 (PLFYAVSLLLPSIFLMVVDIVGFCLPP). Residues 274–278 (DSGER) lie on the Cytoplasmic side of the membrane. A helical membrane pass occupies residues 279–297 (VSFKITLLLGYSVFLIIVS). Over 298–307 (DTLPATAIGT) the chain is Extracellular. The helical transmembrane segment at 308 to 326 (PLIGVYFVVCMALLVISLA) threads the bilayer. Topologically, residues 327–460 (ETIFIVQLVH…GYVLDRLLFR (134 aa)) are cytoplasmic. The disordered stretch occupies residues 393-414 (VGSPQDLEKTSRSRDSPLPPPR). The span at 398-407 (DLEKTSRSRD) shows a compositional bias: basic and acidic residues. An HA-stretch; determines single-channel conductance in 5-HT3 receptors region spans residues 419-455 (AVRGLLQELSSIRHSLEKRDEMREVARDWLRVGYVLD). The chain crosses the membrane as a helical span at residues 461–480 (IYLLAVLAYSITLVTLWSIW). Topologically, residues 481–483 (HYS) are extracellular.

It belongs to the ligand-gated ion channel (TC 1.A.9) family. 5-hydroxytryptamine receptor (TC 1.A.9.2) subfamily. HTR3A sub-subfamily. In terms of assembly, forms homopentameric as well as heteropentameric serotonin-activated cation-selective channel complexes with HTR3B or HTR3C or HTR3D or HTR3E. The homomeric complex is functional but exhibits low conductance with modified voltage dependence, and decreased agonist and antagonist affinity. Heteropentameric complexes display properties which resemble that of neuronal serotonin-activated channels in vivo. Interacts with RIC3. As to expression, expressed in central and peripheral neurons.

It localises to the postsynaptic cell membrane. The protein resides in the cell membrane. The catalysed reaction is Na(+)(in) = Na(+)(out). It carries out the reaction K(+)(in) = K(+)(out). The enzyme catalyses Ca(2+)(in) = Ca(2+)(out). It catalyses the reaction Mg(2+)(in) = Mg(2+)(out). In terms of biological role, forms serotonin (5-hydroxytryptamine/5-HT3)-activated cation-selective channel complexes, which when activated cause fast, depolarizing responses in neurons. The sequence is that of 5-hydroxytryptamine receptor 3A from Rattus norvegicus (Rat).